The chain runs to 316 residues: MSIKEQTLMTPYLQFDRNQWAAQRDSVPMTLSEDEIARLKGINEDLSLEEVAEIYLPLSRLLNFYISSNLRRQAVLEQFLGTNGQRIPYIISIAGSVAVGKSTTARVLQALLSRWPEHRRVELITTDGFLHPNQVLKERGLMKKKGFPESYDMHRLVKFVSDLKSGVPNVTAPVYSHLIYDVIPDGDKTVVQPDILILEGLNVLQSGMDYPHDPHHVFVSDFVDFSIYVDAPEDLLQTWYINRFLKFREGAFTDPDSYFHNYAKLTKEEAIKTAMTLWKEINWLNLKQNILPTRERASLILTKSANHAVEEVRLRK.

95 to 102 (GSVAVGKS) lines the ATP pocket.

This sequence belongs to the prokaryotic pantothenate kinase family.

It is found in the cytoplasm. The catalysed reaction is (R)-pantothenate + ATP = (R)-4'-phosphopantothenate + ADP + H(+). Its pathway is cofactor biosynthesis; coenzyme A biosynthesis; CoA from (R)-pantothenate: step 1/5. The sequence is that of Pantothenate kinase from Shigella boydii serotype 18 (strain CDC 3083-94 / BS512).